Reading from the N-terminus, the 123-residue chain is Succinate dehydrogenase assembly factor 3, mitochondrial (123 aa).

The transit peptide at methionine 1–leucine 31 directs the protein to the mitochondrion.

The protein belongs to the complex I LYR family. SDHAF3 subfamily. Interacts with sdhb within an sdha-sdhb subcomplex.

The protein resides in the mitochondrion matrix. In terms of biological role, plays an essential role in the assembly of succinate dehydrogenase (SDH), an enzyme complex (also referred to as respiratory complex II) that is a component of both the tricarboxylic acid (TCA) cycle and the mitochondrial electron transport chain, and which couples the oxidation of succinate to fumarate with the reduction of ubiquinone (coenzyme Q) to ubiquinol. Promotes maturation of the iron-sulfur protein subunit sdhb of the SDH catalytic dimer, protecting it from the deleterious effects of oxidants. May act together with SDHAF1. This chain is Succinate dehydrogenase assembly factor 3, mitochondrial, found in Danio rerio (Zebrafish).